The sequence spans 462 residues: Protoheme IX farnesyltransferase, mitochondrial (462 aa).

The N-terminal 30 residues, 1–30, are a transit peptide targeting the mitochondrion; it reads MSYFPRTYAHLMRNVLAHNKGNIYLQIGTQ. Transmembrane regions (helical) follow at residues 158-178, 234-254, 274-294, 298-318, 352-372, 373-393, and 425-445; these read TILV…PASV, LIGT…VAIL, IINT…GWAA, LSHP…FPHF, YSIL…TDWY, YQID…KFYW, and FMAS…HKKG.

This sequence belongs to the UbiA prenyltransferase family. In terms of assembly, forms ~370 kDa homooligomeric complexes.

Its subcellular location is the mitochondrion. The protein resides in the mitochondrion membrane. The catalysed reaction is heme b + (2E,6E)-farnesyl diphosphate + H2O = Fe(II)-heme o + diphosphate. It functions in the pathway porphyrin-containing compound metabolism; heme O biosynthesis; heme O from protoheme: step 1/1. Its activity is regulated as follows. Positively regulated by the hydroxylated intermediate (heme I) formed at the subsequent step, or by HAS/COX15 itself. Catalyzes the first reaction in the biosynthesis of heme A, a prosthetic group of mitochondrial cytochrome c oxidase (CcO). Heme A is synthesized from heme B by two sequential enzymatic reactions catalyzed by heme O synthase (HOS/COX10) and heme A synthase (HAS/COX15). HOS converts heme B (protoheme IX) to heme O by substitution of the vinyl group on carbon 2 of heme B porphyrin ring with a hydroxyethyl farnesyl side group. This Saccharomyces cerevisiae (strain ATCC 204508 / S288c) (Baker's yeast) protein is Protoheme IX farnesyltransferase, mitochondrial (COX10).